The chain runs to 320 residues: Thymidine kinase (320 aa).

Residue G10–S17 participates in ATP binding. The active-site Proton acceptor is the E33. 2 residues coordinate substrate: Y51 and Q75. R162 serves as a coordination point for ATP. Substrate is bound at residue R168.

It belongs to the herpesviridae thymidine kinase family. As to quaternary structure, homodimer.

It catalyses the reaction thymidine + ATP = dTMP + ADP + H(+). Its function is as follows. Catalyzes the transfer of the gamma-phospho group of ATP to thymidine to generate dTMP in the salvage pathway of pyrimidine synthesis. The dTMP serves as a substrate for DNA polymerase during viral DNA replication. Allows the virus to be reactivated and to grow in non-proliferative cells lacking a high concentration of phosphorylated nucleic acid precursors. This chain is Thymidine kinase, found in Suid herpesvirus 1 (strain NIA-3) (SuHV-1).